We begin with the raw amino-acid sequence, 647 residues long: DNA ligase (647 aa).

Residues 30–34 (DEEYD), 79–80 (SM), and E105 each bind NAD(+). The active-site N6-AMP-lysine intermediate is the K107. Residues R128, E162, and K301 each contribute to the NAD(+) site. Zn(2+) is bound by residues C395, C398, C411, and C416. Residues 570-647 (KSDSVIFGKT…ESAFNELVKE (78 aa)) enclose the BRCT domain.

This sequence belongs to the NAD-dependent DNA ligase family. LigA subfamily. The cofactor is Mg(2+). It depends on Mn(2+) as a cofactor.

It carries out the reaction NAD(+) + (deoxyribonucleotide)n-3'-hydroxyl + 5'-phospho-(deoxyribonucleotide)m = (deoxyribonucleotide)n+m + AMP + beta-nicotinamide D-nucleotide.. Its function is as follows. DNA ligase that catalyzes the formation of phosphodiester linkages between 5'-phosphoryl and 3'-hydroxyl groups in double-stranded DNA using NAD as a coenzyme and as the energy source for the reaction. It is essential for DNA replication and repair of damaged DNA. The protein is DNA ligase of Campylobacter jejuni subsp. doylei (strain ATCC BAA-1458 / RM4099 / 269.97).